The following is a 238-amino-acid chain: UPF0328 protein ECU07_0010 (238 aa).

Disordered regions lie at residues 1–154 (MAAP…NTQR) and 211–238 (GRLH…LATL). The segment covering 106–128 (HTEGCHTHEANPEPNTKHTETES) has biased composition (basic and acidic residues). Positions 129–152 (PKPQTSTQHHTPITIPSSLLSQNT) are enriched in polar residues.

Belongs to the UPF0328 family.

The sequence is that of UPF0328 protein ECU07_0010 from Encephalitozoon cuniculi (strain GB-M1) (Microsporidian parasite).